The chain runs to 428 residues: Phosphoglucosamine mutase (428 aa).

The active-site Phosphoserine intermediate is Ser-96. Residues Ser-96, Asp-229, Asp-231, and Asp-233 each coordinate Mg(2+). Ser-96 bears the Phosphoserine mark.

It belongs to the phosphohexose mutase family. Mg(2+) is required as a cofactor. Post-translationally, activated by phosphorylation.

It carries out the reaction alpha-D-glucosamine 1-phosphate = D-glucosamine 6-phosphate. Catalyzes the conversion of glucosamine-6-phosphate to glucosamine-1-phosphate. The protein is Phosphoglucosamine mutase of Thermotoga neapolitana (strain ATCC 49049 / DSM 4359 / NBRC 107923 / NS-E).